We begin with the raw amino-acid sequence, 330 residues long: Tryptophan--tRNA ligase (330 aa).

ATP contacts are provided by residues 9-11 (QPT) and 17-18 (GN). Residues 10–18 (PTGDPHIGN) carry the 'HIGH' region motif. D136 provides a ligand contact to L-tryptophan. ATP contacts are provided by residues 148 to 150 (GED), I187, and 195 to 199 (KMSKS). A 'KMSKS' region motif is present at residues 195 to 199 (KMSKS).

This sequence belongs to the class-I aminoacyl-tRNA synthetase family. As to quaternary structure, homodimer.

The protein resides in the cytoplasm. The catalysed reaction is tRNA(Trp) + L-tryptophan + ATP = L-tryptophyl-tRNA(Trp) + AMP + diphosphate + H(+). Its function is as follows. Catalyzes the attachment of tryptophan to tRNA(Trp). In Deinococcus radiodurans (strain ATCC 13939 / DSM 20539 / JCM 16871 / CCUG 27074 / LMG 4051 / NBRC 15346 / NCIMB 9279 / VKM B-1422 / R1), this protein is Tryptophan--tRNA ligase.